The sequence spans 348 residues: Cyclin-dependent kinase inhibitor 1C (348 aa).

Arginine 109 is subject to Omega-N-methylarginine. The tract at residues 115–348 (VAVIPRSGPP…VEQTPRKRLR (234 aa)) is disordered. 2 stretches are compositionally biased toward acidic residues: residues 207–220 (QGEESGAEPGDELG) and 227–274 (QGEE…QDEN). Basic and acidic residues predominate over residues 275-284 (QEQRGQELKD). Positions 309–312 (KRKR) match the Nuclear localization signal motif.

This sequence belongs to the CDI family. In terms of assembly, interacts with PCNA. In terms of tissue distribution, expressed in the heart, brain, lung, skeletal muscle, kidney, pancreas and testis. High levels are seen in the placenta while low levels are seen in the liver.

It is found in the nucleus. Functionally, potent tight-binding inhibitor of several G1 cyclin/CDK complexes (cyclin E-CDK2, cyclin D2-CDK4, and cyclin A-CDK2) and, to lesser extent, of the mitotic cyclin B-CDC2. Negative regulator of cell proliferation. May play a role in maintenance of the non-proliferative state throughout life. This is Cyclin-dependent kinase inhibitor 1C (Cdkn1c) from Mus musculus (Mouse).